Reading from the N-terminus, the 271-residue chain is Metal-staphylopine import system ATP-binding protein CntD (271 aa).

In terms of domain architecture, ABC transporter spans 6-251 (VKHLTITDTW…PEHVYTKYLL (246 aa)). 38-45 (GESGSGKS) serves as a coordination point for ATP.

It belongs to the ABC transporter superfamily. The complex is composed of two ATP-binding proteins (CntD and CntF), two transmembrane proteins (CntB and CntC) and a solute-binding protein (CntA).

The protein resides in the cell membrane. Its activity is regulated as follows. Nickel/cobalt import is reduced in the presence of zinc. Functionally, part of the ABC transporter complex CntABCDF (Opp1) involved in the uptake of metal in complex with the metallophore staphylopine (StP). Involved in the import of divalent metals ions such as nickel, cobalt and zinc. Probably responsible for energy coupling to the transport system. Plays a major role in nickel/cobalt import in zinc-depleted conditions. Contributes to virulence. Required for full urease activity in vitro. The chain is Metal-staphylopine import system ATP-binding protein CntD from Staphylococcus aureus (strain NCTC 8325 / PS 47).